Here is a 693-residue protein sequence, read N- to C-terminus: Transforming growth factor beta activator LRRC33 (693 aa).

A signal peptide spans 1-19 (MEFPPLWLCLGFHFLIVEW). Residues 20–651 (RSGPGTATAA…CKWEQVDTGL (632 aa)) are Extracellular-facing. An LRRNT domain is found at 29–56 (ASQGGCKVVDGVADCRGLNLASVPSSLP). LRR repeat units follow at residues 58–79 (HSRM…SLQA), 82–103 (RLEN…AFRE), 106–127 (HLRN…SAAA), 133–155 (GLRR…MLQN), 158–179 (SLEV…IFEG), 182–203 (HLVE…AFDG), 206–227 (ELRR…SLTQ), 228–239 (LRFLNVSYNILE), 251–272 (ELEI…PQCG), and 273–294 (KLHT…YNTS). N-linked (GlcNAc...) asparagine glycosylation is found at asparagine 74 and asparagine 85. Asparagine 155 is a glycosylation site (N-linked (GlcNAc...) asparagine). Asparagine 232 carries N-linked (GlcNAc...) asparagine glycosylation. 3 N-linked (GlcNAc...) asparagine glycosylation sites follow: asparagine 292, asparagine 309, and asparagine 312. 11 LRR repeats span residues 329 to 350 (ALRF…FLKK), 353 to 374 (SLSH…EHEP), 377 to 398 (ALTE…PGLT), 403 to 424 (NLRV…LFDN), 427 to 448 (SITT…VPVD), 463 to 484 (SLRS…PFQG), 486 to 507 (SLTH…SPLW), 512 to 533 (TLQV…MDFS), 537 to 558 (NLRA…KGSL), 559 to 580 (ALRT…VVSE), and 585 to 605 (GLQT…EGWG). Asparagine 408 and asparagine 424 each carry an N-linked (GlcNAc...) asparagine glycan. Asparagine 500 carries N-linked (GlcNAc...) asparagine glycosylation. The 39-residue stretch at 606–644 (ALQQHFKTVADLSMVTCNLSSKIVRVVELPEGLPQGCKW) folds into the LRRCT domain. Asparagine 623 carries N-linked (GlcNAc...) asparagine glycosylation. A helical membrane pass occupies residues 652–672 (FYLVLILPSCLTLLVACTVVF). Residues 673 to 693 (LTFKKPLLQVIKSRCHWSSIY) are Cytoplasmic-facing.

The protein belongs to the LRRC32/LRRC33 family. In terms of assembly, interacts with TGFB1; associates via disulfide bonds with the Latency-associated peptide chain (LAP) regulatory chain of TGFB1, leading to regulate activation of TGF-beta-1. Interacts (via LRR repeats) with TLR2, TLR3, TLR4, TLR9 and probably other Toll-like receptors. Interacts with CYBB/NOX2; the interaction is direct. In terms of processing, N-glycosylated. As to expression, mainly expressed in cells of hematopoietic origin, such as in immune organs such as lymph nodes, thymus and spleen. Among leukocytes, expressed at higher level in myeloid cell such as macrophages, neutrophils and dendritic cells. Highly expressed in central nervous system-resident macrophages, including microglia and perivascular macrophages.

Its subcellular location is the cell membrane. It localises to the endoplasmic reticulum membrane. Key regulator of transforming growth factor beta-1 (TGFB1) specifically required for microglia function in the nervous system. Required for activation of latent TGF-beta-1 in macrophages and microglia: associates specifically via disulfide bonds with the Latency-associated peptide (LAP), which is the regulatory chain of TGFB1, and regulates integrin-dependent activation of TGF-beta-1. TGF-beta-1 activation mediated by LRRC33/NRROS is highly localized: there is little spreading of TGF-beta-1 activated from one microglial cell to neighboring microglia, suggesting the existence of localized and selective activation of TGF-beta-1 by LRRC33/NRROS. Indirectly plays a role in Toll-like receptor (TLR) signaling: ability to inhibit TLR-mediated NF-kappa-B activation and cytokine production is probably a consequence of its role in TGF-beta-1 signaling. This chain is Transforming growth factor beta activator LRRC33, found in Mus musculus (Mouse).